The following is a 545-amino-acid chain: Spermatogenesis-associated serine-rich protein 2 (545 aa).

Over residues 87–96 (KKNKKKKSKP) the composition is skewed to basic residues. The interval 87 to 133 (KKNKKKKSKPKPASEASGSAPDSSKSAPIQEEQPASSEKGSINGYHV) is disordered. A compositionally biased stretch (low complexity) spans 97–107 (KPASEASGSAP). Residues 108-126 (DSSKSAPIQEEQPASSEKG) show a composition bias toward polar residues. Phosphoserine occurs at positions 142, 145, and 147. 2 disordered regions span residues 202–232 (RNAAKSLSRTTPGAQVSNLGMENVPLSSTNK) and 390–545 (VSLS…AANS). Residues 391–413 (SLSGPSDGSAASSSPDASVPSLP) show a composition bias toward low complexity. The segment covering 455–464 (RAQSQKTADP) has biased composition (polar residues). Phosphoserine is present on Ser520.

The protein belongs to the SPATS2 family. Detected in testis, in spermatocytes and round spermatids (at protein level). Highly expressed in testis, and detected at lower levels in brain, heart, thymus, skeletal muscle, ovary, stomach and lung.

It localises to the cytoplasm. The sequence is that of Spermatogenesis-associated serine-rich protein 2 (Spats2) from Mus musculus (Mouse).